A 361-amino-acid polypeptide reads, in one-letter code: Probable S-adenosylmethionine-dependent methyltransferase At5g38780 (361 aa).

Y19, C64, N69, D106, L107, S135, and F136 together coordinate S-adenosyl-L-homocysteine. Residues N174, E260, F262, and N263 each contribute to the Mg(2+) site.

Belongs to the methyltransferase superfamily. Type-7 methyltransferase family. In terms of assembly, homodimer. Mg(2+) serves as cofactor.

The polypeptide is Probable S-adenosylmethionine-dependent methyltransferase At5g38780 (Arabidopsis thaliana (Mouse-ear cress)).